A 431-amino-acid chain; its full sequence is U-box domain-containing protein 20 (431 aa).

The U-box domain occupies 32–106; it reads TIPSQFQCPI…QGWCGSSLGG (75 aa).

It catalyses the reaction S-ubiquitinyl-[E2 ubiquitin-conjugating enzyme]-L-cysteine + [acceptor protein]-L-lysine = [E2 ubiquitin-conjugating enzyme]-L-cysteine + N(6)-ubiquitinyl-[acceptor protein]-L-lysine.. It functions in the pathway protein modification; protein ubiquitination. Its function is as follows. Functions as an E3 ubiquitin ligase. This Arabidopsis thaliana (Mouse-ear cress) protein is U-box domain-containing protein 20 (PUB20).